The chain runs to 490 residues: Glutathione hydrolase 6 (490 aa).

At 1–52 (MEPEAGPVLYQKLRVWEPSLESEEEEEEISEQLILDASGPHDSSGNKAGRLP) the chain is on the cytoplasmic side. A helical; Signal-anchor for type II membrane protein membrane pass occupies residues 53 to 73 (GAWAQLVAALLLLAIGFSLAV). Topologically, residues 74–490 (RQLCSSGASP…PSGCCPFQGF (417 aa)) are extracellular. Asn160, Asn165, and Asn374 each carry an N-linked (GlcNAc...) asparagine glycan.

Belongs to the gamma-glutamyltransferase family. Heterodimer composed of the light and heavy chains. The active site is located in the light chain. In terms of processing, cleaved by autocatalysis into a large and a small subunit and the autocatalytic cleavage is essential to the functional activation of the enzyme.

It is found in the membrane. It carries out the reaction an N-terminal (5-L-glutamyl)-[peptide] + an alpha-amino acid = 5-L-glutamyl amino acid + an N-terminal L-alpha-aminoacyl-[peptide]. The catalysed reaction is glutathione + H2O = L-cysteinylglycine + L-glutamate. It catalyses the reaction an S-substituted glutathione + H2O = an S-substituted L-cysteinylglycine + L-glutamate. The protein operates within sulfur metabolism; glutathione metabolism. Hydrolyzes and transfers gamma-glutamyl moieties from glutathione and other gamma-glutamyl compounds to acceptors. This is Glutathione hydrolase 6 from Bos taurus (Bovine).